A 381-amino-acid polypeptide reads, in one-letter code: Alkanesulfonate monooxygenase (381 aa).

This sequence belongs to the SsuD family. In terms of assembly, homotetramer.

It catalyses the reaction an alkanesulfonate + FMNH2 + O2 = an aldehyde + FMN + sulfite + H2O + 2 H(+). In terms of biological role, catalyzes the desulfonation of aliphatic sulfonates. In Escherichia coli O81 (strain ED1a), this protein is Alkanesulfonate monooxygenase.